Reading from the N-terminus, the 249-residue chain is Small ribosomal subunit protein uS2 (249 aa).

This sequence belongs to the universal ribosomal protein uS2 family.

The protein is Small ribosomal subunit protein uS2 of Bordetella avium (strain 197N).